The following is a 352-amino-acid chain: Photosystem II D2 protein (352 aa).

The chain crosses the membrane as a helical span at residues 40 to 60 (CAFLSIGGWLTGTTFVTSWYT). His117 serves as a coordination point for chlorophyll a. A helical membrane pass occupies residues 124–140 (GFCLRQIEIARLVGIRP). Pheophytin a is bound by residues Gln129 and Asn142. The chain crosses the membrane as a helical span at residues 152–165 (VFVSVFLMYPLGQS). His197 is a binding site for chlorophyll a. Residues 207–227 (GALLCAIHGATVENTLFQDGE) traverse the membrane as a helical segment. A plastoquinone contacts are provided by His214 and Phe261. His214 is a Fe cation binding site. Residue His268 coordinates Fe cation. A helical membrane pass occupies residues 278-294 (GLWMSSIGIVGLAFNLR).

It belongs to the reaction center PufL/M/PsbA/D family. PSII is composed of 1 copy each of membrane proteins PsbA, PsbB, PsbC, PsbD, PsbE, PsbF, PsbH, PsbI, PsbJ, PsbK, PsbL, PsbM, PsbT, PsbX, PsbY, PsbZ, Psb30/Ycf12, peripheral proteins PsbO, CyanoQ (PsbQ), PsbU, PsbV and a large number of cofactors. It forms dimeric complexes. The cofactor is The D1/D2 heterodimer binds P680, chlorophylls that are the primary electron donor of PSII, and subsequent electron acceptors. It shares a non-heme iron and each subunit binds pheophytin, quinone, additional chlorophylls, carotenoids and lipids. There is also a Cl(-1) ion associated with D1 and D2, which is required for oxygen evolution. The PSII complex binds additional chlorophylls, carotenoids and specific lipids..

The protein resides in the cellular thylakoid membrane. The enzyme catalyses 2 a plastoquinone + 4 hnu + 2 H2O = 2 a plastoquinol + O2. Functionally, photosystem II (PSII) is a light-driven water:plastoquinone oxidoreductase that uses light energy to abstract electrons from H(2)O, generating O(2) and a proton gradient subsequently used for ATP formation. It consists of a core antenna complex that captures photons, and an electron transfer chain that converts photonic excitation into a charge separation. The D1/D2 (PsbA/PsbD) reaction center heterodimer binds P680, the primary electron donor of PSII as well as several subsequent electron acceptors. D2 is needed for assembly of a stable PSII complex. This is Photosystem II D2 protein from Trichodesmium erythraeum (strain IMS101).